We begin with the raw amino-acid sequence, 326 residues long: MTEIANGQQILPPDYTLKEPEPEHCPGPESENAGKGDSCQGCANKEVCESLPKGPDPDLPLIKENLANIKHKILILSGKGGVGKSTFTTMLSWALSADEDLQVGAMDLDICGPSLPHMLGCVRETIHESNTGWTPVYVTDNLATMSIQYMLPDTDSAIIWRGSKKNALIKKFLKDVDWDYLDYLLIDTPPGTSDEHISINNYLKESQIDGALIVTTPQEVALLDVRKEINFCRKAGINILGLVENMSGFVCPNCKGESKIFKATTGGGKALCNELGIDFLGSVPLDPRIGRCCETGESFLDEFPDSPASTAILEVIESLRDAVGDV.

Positions 1–38 are disordered; it reads MTEIANGQQILPPDYTLKEPEPEHCPGPESENAGKGDS. The segment covering 16-26 has biased composition (basic and acidic residues); sequence TLKEPEPEHCP. 4 residues coordinate [4Fe-4S] cluster: Cys-25, Cys-39, Cys-42, and Cys-48. 78-85 contributes to the ATP binding site; that stretch reads GKGGVGKS. The [4Fe-4S] cluster site is built by Cys-251 and Cys-254.

It belongs to the Mrp/NBP35 ATP-binding proteins family. NUBP1/NBP35 subfamily. Heterotetramer of 2 NBP35 and 2 CFD1 chains. Requires [4Fe-4S] cluster as cofactor.

The protein localises to the cytoplasm. It localises to the nucleus. Functionally, component of the cytosolic iron-sulfur (Fe/S) protein assembly (CIA) machinery. Required for maturation of extramitochondrial Fe-S proteins. The NBP35-CFD1 heterotetramer forms a Fe-S scaffold complex, mediating the de novo assembly of an Fe-S cluster and its transfer to target apoproteins. Required for biogenesis and export of both ribosomal subunits, which may reflect a role in assembly of the Fe/S clusters in RLI1, a protein which performs rRNA processing and ribosome export. The sequence is that of Cytosolic Fe-S cluster assembly factor NBP35 from Kluyveromyces lactis (strain ATCC 8585 / CBS 2359 / DSM 70799 / NBRC 1267 / NRRL Y-1140 / WM37) (Yeast).